A 170-amino-acid polypeptide reads, in one-letter code: Peptide deformylase (170 aa).

Fe cation is bound by residues cysteine 91 and histidine 133. The active site involves glutamate 134. Histidine 137 contributes to the Fe cation binding site.

The protein belongs to the polypeptide deformylase family. Fe(2+) serves as cofactor.

It catalyses the reaction N-terminal N-formyl-L-methionyl-[peptide] + H2O = N-terminal L-methionyl-[peptide] + formate. Removes the formyl group from the N-terminal Met of newly synthesized proteins. Requires at least a dipeptide for an efficient rate of reaction. N-terminal L-methionine is a prerequisite for activity but the enzyme has broad specificity at other positions. The polypeptide is Peptide deformylase (Pasteurella multocida (strain Pm70)).